The chain runs to 349 residues: Bifunctional nitrilase/nitrile hydratase NIT4A (349 aa).

In terms of domain architecture, CN hydrolase spans 29–301 (VRATVVQAST…EALISADLDL (273 aa)). Glu-69 functions as the Proton acceptor in the catalytic mechanism. The active site involves Lys-156. Catalysis depends on Cys-190, which acts as the Nucleophile.

The protein belongs to the carbon-nitrogen hydrolase superfamily. Nitrilase family. In terms of tissue distribution, ubiquitous.

The catalysed reaction is L-asparagine = 3-cyano-L-alanine + H2O. The enzyme catalyses 3-cyano-L-alanine + 2 H2O = L-aspartate + NH4(+). Its function is as follows. Involved in the cyanide detoxification pathway. Has nitrilase and nitrile-hydratase activity in the ratio 4.0:1, producing both asparagine and aspartic acid from beta-cyano-L-alanine (Ala(CN)). Can also use 3-phenylpropionitrile as substrate, but not indole-3-acetonitrile. In Lupinus angustifolius (Narrow-leaved blue lupine), this protein is Bifunctional nitrilase/nitrile hydratase NIT4A (NIT4A).